The sequence spans 192 residues: Ciliary microtubule-associated protein 3 (192 aa).

As to quaternary structure, interacts with proteins involved in ciliary transport, including ARL13B, CETN1, KIF3A, RAB6A, RAB8A, TUBB1 and TUBG1. Interacts with AURKA.

The protein localises to the cytoplasmic vesicle. The protein resides in the golgi apparatus. It is found in the trans-Golgi network. It localises to the cytoplasm. During primary cilia disassembly, involved in cilia disassembly. Required specifically to control cilia retraction as well as the liberation and duplication of the basal body/centrosome. May act by stimulating AURKA activity at the basal body in a cell cycle-dependent manner. The polypeptide is Ciliary microtubule-associated protein 3 (CIMAP3) (Bos taurus (Bovine)).